A 284-amino-acid chain; its full sequence is MLTSLITSSTTVTLTLSQIYYILDIACGFLISVLVWMNSSVLDNGNHSNPQIRDMSSNMIKADCVVIEDSFRGFPTEYFCTSPRYDECLDYVLIPNGMIKDRLEKMSMDIVDYYEACNATSITLMCVLKGGFKFLADLVDGLERTVRARGIVLPMSVEFVRVKSYVNDVSIHEPILTGLGDPSEYKDKNVLVVEDIIDTGKTITKLISHLDSLSTKSVKVASLLVKRTSPRNDYRPDVGFEVPNRFVVGYALDYNDNFRDLHHICVINEVGQKKFSVPCTSKPV.

GMP is bound by residues Lys-129, 194 to 202, Lys-226, and Asp-253; that span reads EDIIDTGKT. The Proton acceptor role is filled by Asp-198. Residue Asp-253 coordinates Mg(2+).

The protein belongs to the purine/pyrimidine phosphoribosyltransferase family. Homotetramer. It depends on Mg(2+) as a cofactor.

The protein resides in the cytoplasm. The catalysed reaction is IMP + diphosphate = hypoxanthine + 5-phospho-alpha-D-ribose 1-diphosphate. It catalyses the reaction GMP + diphosphate = guanine + 5-phospho-alpha-D-ribose 1-diphosphate. It functions in the pathway purine metabolism; IMP biosynthesis via salvage pathway; IMP from hypoxanthine: step 1/1. Its function is as follows. Converts guanine to guanosine monophosphate, and hypoxanthine to inosine monophosphate. Transfers the 5-phosphoribosyl group from 5-phosphoribosylpyrophosphate onto the purine. Plays a central role in the generation of purine nucleotides through the purine salvage pathway. This is Hypoxanthine-guanine phosphoribosyltransferase (HGPRT) from Schistosoma mansoni (Blood fluke).